Consider the following 371-residue polypeptide: Beta-1,3-galactosyltransferase 4 (371 aa).

Residues 1–4 are Cytoplasmic-facing; it reads MPLS. A helical; Signal-anchor for type II membrane protein membrane pass occupies residues 5–25; sequence LFRRLLLAVLLLVIIWTLFGP. Topologically, residues 26–371 are lumenal; the sequence is SGLGEELLSL…RCRFIAWLNS (346 aa). N143 carries an N-linked (GlcNAc...) asparagine glycan. Residues 187-208 are disordered; it reads GGPSEQWQKGKEPQEETTAVHK. Residues 194–207 are compositionally biased toward basic and acidic residues; the sequence is QKGKEPQEETTAVH.

It belongs to the glycosyltransferase 31 family. As to expression, highly expressed in thymus, spleen, kidney and testis and, to a lesser extent, in brain and liver.

It localises to the golgi apparatus membrane. It carries out the reaction a ganglioside GM2 (d18:1(4E)) + UDP-alpha-D-galactose = a ganglioside GM1 (d18:1(4E)) + UDP + H(+). The catalysed reaction is a ganglioside GM2 + UDP-alpha-D-galactose = a ganglioside GM1 + UDP + H(+). The enzyme catalyses a ganglioside GD2 (d18:1(4E)) + UDP-alpha-D-galactose = a ganglioside GD1b (d18:1(4E)) + UDP + H(+). It catalyses the reaction a ganglioside GA2 (d18:1(4E)) + UDP-alpha-D-galactose = a ganglioside GA1 (d18:1(4E)) + UDP + H(+). Its pathway is protein modification; protein glycosylation. Involved in GM1/GD1B/GA1 ganglioside biosynthesis. The chain is Beta-1,3-galactosyltransferase 4 (B3galt4) from Rattus norvegicus (Rat).